The primary structure comprises 143 residues: Nucleoside diphosphate kinase (143 aa).

Residues Lys-11, Phe-59, Arg-87, Thr-93, Arg-104, and Asn-114 each contribute to the ATP site. The Pros-phosphohistidine intermediate role is filled by His-117.

It belongs to the NDK family. As to quaternary structure, homotetramer. Mg(2+) serves as cofactor.

Its subcellular location is the cytoplasm. The enzyme catalyses a 2'-deoxyribonucleoside 5'-diphosphate + ATP = a 2'-deoxyribonucleoside 5'-triphosphate + ADP. It catalyses the reaction a ribonucleoside 5'-diphosphate + ATP = a ribonucleoside 5'-triphosphate + ADP. Its function is as follows. Major role in the synthesis of nucleoside triphosphates other than ATP. The ATP gamma phosphate is transferred to the NDP beta phosphate via a ping-pong mechanism, using a phosphorylated active-site intermediate. This Acinetobacter baylyi (strain ATCC 33305 / BD413 / ADP1) protein is Nucleoside diphosphate kinase.